A 445-amino-acid polypeptide reads, in one-letter code: Gamma conglutin 2 (445 aa).

A signal peptide spans 1-33 (MAQNMAPIFHFIAISLSCSFLFVLSSSQDSQSL). The 366-residue stretch at 60–425 (HWANIHKRTP…DFAKSRVEFN (366 aa)) folds into the Peptidase A1 domain. Intrachain disulfides connect C88/C178, C102/C115, C107/C133, C118/C128, and C346/C387. Residue N130 is glycosylated (N-linked (GlcNAc...) asparagine).

It belongs to the peptidase A1 family. Two-subunit monomeric unit made of alpha and beta subunits coupled by disulfide bonds (at pH 4.5 and under non-reducing conditions). Can also form oligomers including dimer, tetramer and cyclic hexamer (trimer of dimers) (at pH &gt; 5.5). Component of globulins complexes which accumulate in seeds. Interacts with flavonoids (e.g. apigenin glucosides) present in globulins complexes. Glycosylated on alpha chain.

Its subcellular location is the secreted. The protein localises to the extracellular space. Functionally, sulfur-rich seed storage protein that remains undegraded at germination. In Lupinus angustifolius (Narrow-leaved blue lupine), this protein is Gamma conglutin 2.